Consider the following 262-residue polypeptide: Flap endonuclease Xni (262 aa).

Asp105 is a Mg(2+) binding site. The 5'-3' exonuclease domain occupies 162-254 (ERSQFLDLMA…LKDFRVIDSL (93 aa)). Residues Leu172, Ala173, Pro181, Ile183, and Ile186 each contribute to the K(+) site. Residues 185 to 190 (GIGPKS) form an interaction with DNA region.

It belongs to the Xni family. Requires Mg(2+) as cofactor. It depends on K(+) as a cofactor.

In terms of biological role, has flap endonuclease activity. During DNA replication, flap endonucleases cleave the 5'-overhanging flap structure that is generated by displacement synthesis when DNA polymerase encounters the 5'-end of a downstream Okazaki fragment. This chain is Flap endonuclease Xni, found in Shewanella baltica (strain OS195).